A 249-amino-acid polypeptide reads, in one-letter code: Small ribosomal subunit protein uS3 (249 aa).

The 70-residue stretch at 39–108 folds into the KH type-2 domain; it reads IRQLINKKLA…TVAVNVAEIP (70 aa). The segment at 214–249 is disordered; it reads ETFARPQRRDRDERRPEGGDRPARRRPTARRRTGGE. Basic and acidic residues predominate over residues 220–235; the sequence is QRRDRDERRPEGGDRP. Residues 236–249 show a composition bias toward basic residues; it reads ARRRPTARRRTGGE.

It belongs to the universal ribosomal protein uS3 family. Part of the 30S ribosomal subunit. Forms a tight complex with proteins S10 and S14.

In terms of biological role, binds the lower part of the 30S subunit head. Binds mRNA in the 70S ribosome, positioning it for translation. The polypeptide is Small ribosomal subunit protein uS3 (Deinococcus radiodurans (strain ATCC 13939 / DSM 20539 / JCM 16871 / CCUG 27074 / LMG 4051 / NBRC 15346 / NCIMB 9279 / VKM B-1422 / R1)).